The sequence spans 423 residues: Sulfate adenylyltransferase (423 aa).

This sequence belongs to the sulfate adenylyltransferase family.

The enzyme catalyses sulfate + ATP + H(+) = adenosine 5'-phosphosulfate + diphosphate. It participates in sulfur metabolism; hydrogen sulfide biosynthesis; sulfite from sulfate: step 1/3. The polypeptide is Sulfate adenylyltransferase (Desulfovibrio desulfuricans (strain ATCC 27774 / DSM 6949 / MB)).